We begin with the raw amino-acid sequence, 230 residues long: Urease accessory protein UreF (230 aa).

The protein belongs to the UreF family. As to quaternary structure, ureD, UreF and UreG form a complex that acts as a GTP-hydrolysis-dependent molecular chaperone, activating the urease apoprotein by helping to assemble the nickel containing metallocenter of UreC. The UreE protein probably delivers the nickel.

The protein localises to the cytoplasm. Its function is as follows. Required for maturation of urease via the functional incorporation of the urease nickel metallocenter. This is Urease accessory protein UreF from Allorhizobium ampelinum (strain ATCC BAA-846 / DSM 112012 / S4) (Agrobacterium vitis (strain S4)).